The sequence spans 265 residues: Secreted RxLR effector protein 146 (265 aa).

Positions 1-25 (MRYYTQVVAASLVATLAVVDSIVFA) are cleaved as a signal peptide. A RxLR-dEER motif is present at residues 32–50 (RFLRQDGATVTRGGKGEER). N-linked (GlcNAc...) asparagine glycans are attached at residues asparagine 71 and asparagine 148.

This sequence belongs to the RxLR effector family.

It is found in the secreted. The protein resides in the host nucleus. Its subcellular location is the host cytoplasm. Functionally, secreted effector that completely suppresses the host cell death induced by cell death-inducing proteins. This chain is Secreted RxLR effector protein 146, found in Plasmopara viticola (Downy mildew of grapevine).